Consider the following 103-residue polypeptide: Large ribosomal subunit protein bL21 (103 aa).

It belongs to the bacterial ribosomal protein bL21 family. As to quaternary structure, part of the 50S ribosomal subunit. Contacts protein L20.

Its function is as follows. This protein binds to 23S rRNA in the presence of protein L20. The sequence is that of Large ribosomal subunit protein bL21 from Mannheimia succiniciproducens (strain KCTC 0769BP / MBEL55E).